The chain runs to 353 residues: D-alanine--D-alanine ligase A (353 aa).

The 206-residue stretch at 141 to 346 (KRLVNEAGLS…YPEIINRLVA (206 aa)) folds into the ATP-grasp domain. 169–224 (EQALGLPIFIKPARQGSSVGVHKVVTEADYQAAMSDGFIYDDKLLAEEFIQAREVE) provides a ligand contact to ATP. Mg(2+)-binding residues include Asp-300, Glu-313, and Asn-315.

The protein belongs to the D-alanine--D-alanine ligase family. It depends on Mg(2+) as a cofactor. Requires Mn(2+) as cofactor.

The protein resides in the cytoplasm. It catalyses the reaction 2 D-alanine + ATP = D-alanyl-D-alanine + ADP + phosphate + H(+). It participates in cell wall biogenesis; peptidoglycan biosynthesis. Functionally, cell wall formation. This chain is D-alanine--D-alanine ligase A, found in Brucella melitensis biotype 1 (strain ATCC 23456 / CCUG 17765 / NCTC 10094 / 16M).